The primary structure comprises 223 residues: Endonuclease V (223 aa).

Residues D35 and D103 each contribute to the Mg(2+) site.

It belongs to the endonuclease V family. Mg(2+) is required as a cofactor.

It is found in the cytoplasm. The catalysed reaction is Endonucleolytic cleavage at apurinic or apyrimidinic sites to products with a 5'-phosphate.. In terms of biological role, DNA repair enzyme involved in the repair of deaminated bases. Selectively cleaves double-stranded DNA at the second phosphodiester bond 3' to a deoxyinosine leaving behind the intact lesion on the nicked DNA. The polypeptide is Endonuclease V (Salmonella schwarzengrund (strain CVM19633)).